The chain runs to 330 residues: Ferric enterobactin transport system permease protein FepG (330 aa).

The Periplasmic portion of the chain corresponds to 1–7 (MIYVSRR). Residues 8 to 28 (LLITCLLLVSACVVAGIWGLR) form a helical membrane-spanning segment. Over 29 to 62 (SGAVTLETSQVFAALMGDAPRSMTMVVTEWRLPR) the chain is Cytoplasmic. The chain crosses the membrane as a helical span at residues 63 to 83 (VLMALLIGAALGVSGAIFQSL). Over 84 to 92 (MRNPLGSPD) the chain is Periplasmic. A helical membrane pass occupies residues 93–113 (VMGFNTGAWSGVLVAMVLFGQ). Topologically, residues 114–117 (DLTA) are cytoplasmic. Residues 118–138 (IALSAMVGGIVTSLLVWLLAW) traverse the membrane as a helical segment. Residues 139–146 (RNGIDTFR) lie on the Periplasmic side of the membrane. Residues 147-167 (LIIIGIGVRAMLVAFNTWLLL) traverse the membrane as a helical segment. At 168–190 (KASLETALTAGLWNAGSLNGLTW) the chain is on the cytoplasmic side. The chain crosses the membrane as a helical span at residues 191 to 211 (AKTSPSAPIIILMLIAAALLV). Residues 212-235 (RRMRLLEMGDDTACALGVSVERSR) are Periplasmic-facing. A helical transmembrane segment spans residues 236-256 (LLMMLVAVVLTAAATALAGPI). Topologically, residues 257–275 (SFIALVAPHIARRISGTAR) are cytoplasmic. A helical membrane pass occupies residues 276-296 (WGLTQAALCGALLLLAADLCA). Residues 297–303 (QQLFMPY) lie on the Periplasmic side of the membrane. Residues 304-324 (QLPVGVVTVSLGGIYLIVLLI) traverse the membrane as a helical segment. Topologically, residues 325-330 (QESRKK) are cytoplasmic.

It belongs to the binding-protein-dependent transport system permease family. FecCD subfamily. In terms of assembly, the complex is composed of two ATP-binding proteins (FepC), two transmembrane proteins (FepD and FepG) and a solute-binding protein (FepB).

The protein resides in the cell inner membrane. Its function is as follows. Part of the ABC transporter complex FepBDGC involved in ferric enterobactin uptake. Responsible for the translocation of the substrate across the membrane. The polypeptide is Ferric enterobactin transport system permease protein FepG (fepG) (Escherichia coli (strain K12)).